Consider the following 167-residue polypeptide: Signal peptidase complex catalytic subunit SEC11 (167 aa).

Over 1-6 (MNIRQQ) the chain is Cytoplasmic. Residues 7 to 24 (LTKFLGLFLTLASAFMFW) traverse the membrane as a helical; Signal-anchor for type II membrane protein segment. At 25–167 (KGLSVVTNSH…LALSSLLGSE (143 aa)) the chain is on the lumenal side. Active-site charge relay system residues include Ser44, His83, and Asp109. The segment at 153 to 164 (ALMGMLALSSLL) is C-terminal short (CTS) helix.

The protein belongs to the peptidase S26B family. Component of the signal peptidase complex (SPC) composed of a catalytic subunit SEC11 and three accessory subunits SPC1, SPC2 and SPC3. The complex induces a local thinning of the ER membrane which is used to measure the length of the signal peptide (SP) h-region of protein substrates. This ensures the selectivity of the complex towards h-regions shorter than 18-20 amino acids. SPC associates with the translocon complex.

It localises to the endoplasmic reticulum membrane. It carries out the reaction Cleavage of hydrophobic, N-terminal signal or leader sequences from secreted and periplasmic proteins.. Catalytic component of the signal peptidase complex (SPC) which catalyzes the cleavage of N-terminal signal sequences from nascent proteins as they are translocated into the lumen of the endoplasmic reticulum. Specifically cleaves N-terminal signal peptides that contain a hydrophobic alpha-helix (h-region) shorter than 18-20 amino acids. In Eremothecium gossypii (strain ATCC 10895 / CBS 109.51 / FGSC 9923 / NRRL Y-1056) (Yeast), this protein is Signal peptidase complex catalytic subunit SEC11 (SEC11).